The primary structure comprises 1268 residues: Neurocan core protein (1268 aa).

The N-terminal stretch at 1 to 22 (MGAGSVWASGLLLLWLLLLVAG) is a signal peptide. Positions 37-157 (RMLKSGSGPV…EQDLVTLEVT (121 aa)) constitute an Ig-like V-type domain. 5 cysteine pairs are disulfide-bonded: Cys58–Cys139, Cys181–Cys252, Cys205–Cys226, Cys279–Cys354, and Cys303–Cys324. A glycan (N-linked (GlcNAc...) asparagine) is linked at Asn121. Link domains follow at residues 159 to 254 (VVFH…YCFA) and 258 to 356 (GGEV…YCFR). An N-linked (GlcNAc...) asparagine glycan is attached at Asn339. 4 disordered regions span residues 363–391 (QHGDSEIPSSGDEGEIVSAEGPPGRELKP), 406–442 (PLMSSGEGEPPDLTWTQAPEETLGSTPGGPTLASWPS), 472–540 (PLGT…DQSH), and 574–630 (ISPS…LQAS). 2 O-linked (Xyl...) (chondroitin sulfate) serine glycosylation sites follow: Ser380 and Ser410. Residues 419-430 (TWTQAPEETLGS) show a composition bias toward polar residues. Residues 575-585 (SPSVPSTESTP) are compositionally biased toward low complexity. Positions 608–617 (PSEPPAPSPG) are enriched in pro residues. A compositionally biased stretch (low complexity) spans 618-630 (PSEALSAVSLQAS). Residue Asn742 is glycosylated (N-linked (GlcNAc...) asparagine). The 37-residue stretch at 960 to 996 (PTDPCENNPCLHGGTCHTNGTVYGCSCDQGYAGENCE) folds into the EGF-like 1 domain. 11 disulfide bridges follow: Cys964–Cys975, Cys969–Cys984, Cys986–Cys995, Cys1002–Cys1013, Cys1007–Cys1022, Cys1024–Cys1033, Cys1040–Cys1051, Cys1068–Cys1160, Cys1136–Cys1152, Cys1167–Cys1210, and Cys1196–Cys1223. A glycan (N-linked (GlcNAc...) asparagine) is linked at Asn978. One can recognise an EGF-like 2; calcium-binding domain in the interval 998–1034 (DIDDCLCSPCENGGTCIDEVNGFICLCLPSYGGSLCE). The C-type lectin domain maps to 1036–1165 (DTEGCDRGWH…LPYVCKKGTV (130 aa)). Residues 1165–1225 (VLCGPPPAVE…WDRPQIMCIK (61 aa)) form the Sushi domain. An N-linked (GlcNAc...) asparagine glycan is attached at Asn1175. Positions 1228 to 1255 (RSHRMRRHHHHPHRHHKPRKEHRKHKRH) are enriched in basic residues. Positions 1228–1268 (RSHRMRRHHHHPHRHHKPRKEHRKHKRHPAEDWEKDEGDFC) are disordered.

It belongs to the aggrecan/versican proteoglycan family. Post-translationally, O-glycosylated; contains chondroitin sulfate. As to expression, brain.

It localises to the secreted. Its function is as follows. May modulate neuronal adhesion and neurite growth during development by binding to neural cell adhesion molecules (NG-CAM and N-CAM). Chondroitin sulfate proteoglycan; binds to hyaluronic acid. The chain is Neurocan core protein (Ncan) from Mus musculus (Mouse).